We begin with the raw amino-acid sequence, 206 residues long: MLKTIRKHGITLALFAAGSTGLTAVINQMTKSTIHEQALQQQHALFDQVLPPDRYNNNLQESCYLVDAPALGKGTHRVFIARKDDKPVAAIIEATAPDGYSGAIQLIVGADFNGTILGTRVTEHHETPGLGDKIERRLSDWITHFSGKTISGENDTHWAVKKDGGDFDQFTGATITPRAVVNAVKRAGLYAESLPAQLPHLTACGE.

A helical membrane pass occupies residues 9–29 (GITLALFAAGSTGLTAVINQM). T174 is modified (FMN phosphoryl threonine).

This sequence belongs to the RnfG family. In terms of assembly, the complex is composed of six subunits: RsxA, RsxB, RsxC, RsxD, RsxE and RsxG. FMN is required as a cofactor.

The protein resides in the cell inner membrane. Its function is as follows. Part of a membrane-bound complex that couples electron transfer with translocation of ions across the membrane. Required to maintain the reduced state of SoxR. This Salmonella typhi protein is Ion-translocating oxidoreductase complex subunit G.